A 125-amino-acid polypeptide reads, in one-letter code: uncharacterized protein (125 aa).

The disordered stretch occupies residues 36–57 (EAKKAKEKQDSKTKDTDKKVDQ). Residues 92-112 (ITIFLLIVLVSAIMIGIYFGI) form a helical membrane-spanning segment.

It is found in the membrane. This is an uncharacterized protein from Mycoplasma pneumoniae (strain ATCC 29342 / M129 / Subtype 1) (Mycoplasmoides pneumoniae).